The primary structure comprises 207 residues: Large ribosomal subunit protein uL4 (207 aa).

Over residues 43–52 the composition is skewed to polar residues; it reads NKRQGTQSAK. The tract at residues 43-72 is disordered; the sequence is NKRQGTQSAKTRAEVRGGGRKPWKQKGTGR. A compositionally biased stretch (basic residues) spans 60 to 71; sequence GGRKPWKQKGTG.

This sequence belongs to the universal ribosomal protein uL4 family. In terms of assembly, part of the 50S ribosomal subunit.

In terms of biological role, one of the primary rRNA binding proteins, this protein initially binds near the 5'-end of the 23S rRNA. It is important during the early stages of 50S assembly. It makes multiple contacts with different domains of the 23S rRNA in the assembled 50S subunit and ribosome. Functionally, forms part of the polypeptide exit tunnel. This Alkaliphilus metalliredigens (strain QYMF) protein is Large ribosomal subunit protein uL4.